The sequence spans 111 residues: Secreted RxLR effector protein 159 (111 aa).

Positions 1–21 (MRGAYYVAIAFLVAASSRTAA) are cleaved as a signal peptide. The RxLR-dEER signature appears at 50-71 (RVLRGSRDLKDKLAVYANDEQR). Asn81 carries an N-linked (GlcNAc...) asparagine glycan.

It belongs to the RxLR effector family.

It is found in the secreted. It localises to the host nucleus. The protein localises to the host cytoplasm. Its function is as follows. Secreted effector that completely suppresses the host cell death induced by cell death-inducing proteins. In Plasmopara viticola (Downy mildew of grapevine), this protein is Secreted RxLR effector protein 159.